Consider the following 260-residue polypeptide: ATP synthase subunit a (260 aa).

The next 6 membrane-spanning stretches (helical) occupy residues 37–57 (FTNA…FMTL), 95–115 (FFPF…IGMF), 125–145 (IVVT…TGFV), 154–174 (VFVP…IEII), 191–211 (MLAG…FMTM), and 233–253 (EFLV…MYLH).

This sequence belongs to the ATPase A chain family. In terms of assembly, F-type ATPases have 2 components, CF(1) - the catalytic core - and CF(0) - the membrane proton channel. CF(1) has five subunits: alpha(3), beta(3), gamma(1), delta(1), epsilon(1). CF(0) has three main subunits: a(1), b(2) and c(9-12). The alpha and beta chains form an alternating ring which encloses part of the gamma chain. CF(1) is attached to CF(0) by a central stalk formed by the gamma and epsilon chains, while a peripheral stalk is formed by the delta and b chains.

The protein resides in the cell inner membrane. Functionally, key component of the proton channel; it plays a direct role in the translocation of protons across the membrane. The sequence is that of ATP synthase subunit a from Parvibaculum lavamentivorans (strain DS-1 / DSM 13023 / NCIMB 13966).